Consider the following 1019-residue polypeptide: Insulin-degrading enzyme (1019 aa).

A Zn(2+)-binding site is contributed by H108. Catalysis depends on E111, which acts as the Proton acceptor. Residues H112 and E189 each contribute to the Zn(2+) site. K192 carries the post-translational modification N6-succinyllysine. Substrate contacts are provided by residues 336–342 (HLIGHEG) and 359–363 (LVGGQ). An ATP-binding site is contributed by R429. K697 is subject to N6-succinyllysine. Positions 853–858 (EKPPHY) match the SlyX motif motif. 895–901 (DKPKKLS) provides a ligand contact to ATP.

This sequence belongs to the peptidase M16 family. In terms of assembly, homodimer. Can also form homotetramers. (Microbial infection) Interacts (via N-terminus) with varicella-zoster virus (VZV) envelope glycoprotein E (via N-terminus); the membrane-associated isoform may function as an entry receptor for this virus. The cofactor is Zn(2+). Post-translationally, the N-terminus is blocked. Detected in brain and in cerebrospinal fluid (at protein level).

It is found in the cytoplasm. Its subcellular location is the cytosol. The protein resides in the cell membrane. The protein localises to the secreted. It catalyses the reaction Degradation of insulin, glucagon and other polypeptides. No action on proteins.. Its activity is regulated as follows. Activated by small peptides. Activated by ATP and GTP, and to a lesser extent by CTP, TTP and PPPi. Inhibited by bacitracin. In vitro modification of Cys residues impairs enzyme activity. In terms of biological role, plays a role in the cellular breakdown of insulin, APP peptides, IAPP peptides, natriuretic peptides, glucagon, bradykinin, kallidin, and other peptides, and thereby plays a role in intercellular peptide signaling. Substrate binding induces important conformation changes, making it possible to bind and degrade larger substrates, such as insulin. Contributes to the regulation of peptide hormone signaling cascades and regulation of blood glucose homeostasis via its role in the degradation of insulin, glucagon and IAPP. Plays a role in the degradation and clearance of APP-derived amyloidogenic peptides that are secreted by neurons and microglia. Degrades the natriuretic peptides ANP, BNP and CNP, inactivating their ability to raise intracellular cGMP. Also degrades an aberrant frameshifted 40-residue form of NPPA (fsNPPA) which is associated with familial atrial fibrillation in heterozygous patients. Involved in antigen processing. Produces both the N terminus and the C terminus of MAGEA3-derived antigenic peptide (EVDPIGHLY) that is presented to cytotoxic T lymphocytes by MHC class I. (Microbial infection) The membrane-associated isoform acts as an entry receptor for varicella-zoster virus (VZV). The polypeptide is Insulin-degrading enzyme (Homo sapiens (Human)).